The following is a 361-amino-acid chain: Ribosomal RNA large subunit methyltransferase M (361 aa).

Residues serine 187, 220-223, aspartate 239, aspartate 259, and aspartate 276 each bind S-adenosyl-L-methionine; that span reads CPGG. Lysine 305 (proton acceptor) is an active-site residue.

This sequence belongs to the class I-like SAM-binding methyltransferase superfamily. RNA methyltransferase RlmE family. RlmM subfamily. Monomer.

The protein localises to the cytoplasm. The catalysed reaction is cytidine(2498) in 23S rRNA + S-adenosyl-L-methionine = 2'-O-methylcytidine(2498) in 23S rRNA + S-adenosyl-L-homocysteine + H(+). In terms of biological role, catalyzes the 2'-O-methylation at nucleotide C2498 in 23S rRNA. This chain is Ribosomal RNA large subunit methyltransferase M, found in Shewanella baltica (strain OS185).